A 713-amino-acid polypeptide reads, in one-letter code: Low-density lipoprotein receptor-related protein 10 (713 aa).

A signal peptide spans 1–16 (MLLATLLLLLLGGALA). Topologically, residues 17–440 (HPDRIIFPNH…WDCSYVLPRK (424 aa)) are extracellular. 2 disulfides stabilise this stretch: Cys28-Cys57 and Cys80-Cys98. A CUB 1 domain is found at 28 to 136 (CEDPPAVLLE…QGFLLSYSQD (109 aa)). Asn56 carries N-linked (GlcNAc...) asparagine glycosylation. N-linked (GlcNAc...) asparagine glycosylation occurs at Asn111. The LDL-receptor class A 1 domain occupies 139–175 (MCLQEEFQCLNHRCVSAVQRCDGVDACGDGSDEAGCS). Disulfide bonds link Cys140–Cys152, Cys147–Cys165, Cys159–Cys174, and Cys192–Cys220. A CUB 2 domain is found at 192–305 (CNVTLEDFYG…RGFNATYHVR (114 aa)). N-linked (GlcNAc...) asparagine glycans are attached at residues Asn193 and Asn299. 3 LDL-receptor class A domains span residues 307–354 (YCLP…EDCP), 355–397 (GCPP…RRCR), and 398–434 (HCQP…WDCS). Cystine bridges form between Cys308–Cys331, Cys315–Cys344, Cys338–Cys353, Cys356–Cys374, Cys363–Cys387, Cys381–Cys396, Cys399–Cys411, Cys406–Cys424, and Cys418–Cys433. The helical transmembrane segment at 441 to 461 (VITAAVIGSLVCGLLLVIALG) threads the bilayer. At 462–713 (CTCKLYAIRT…AEAEDEPLLT (252 aa)) the chain is on the cytoplasmic side. The segment at 564–637 (GLLPRTNTPA…SPAPTTVPEA (74 aa)) is disordered. A compositionally biased stretch (polar residues) spans 569–584 (TNTPARASEARSQVTP). Thr596 is subject to Phosphothreonine. The span at 621–636 (PLPSASTSPAPTTVPE) shows a compositional bias: low complexity.

This sequence belongs to the LDLR family. As to expression, expressed in blood leukocyte, lung, placenta, small intestine, liver, kidney, spleen, thymus, colon, skeletal muscle and heart.

It is found in the membrane. It localises to the coated pit. Functionally, probable receptor, which is involved in the internalization of lipophilic molecules and/or signal transduction. May be involved in the uptake of lipoprotein APOE in liver. In Homo sapiens (Human), this protein is Low-density lipoprotein receptor-related protein 10 (LRP10).